Here is a 148-residue protein sequence, read N- to C-terminus: UPF0134 protein MPN_204 (148 aa).

This sequence belongs to the UPF0134 family.

This chain is UPF0134 protein MPN_204, found in Mycoplasma pneumoniae (strain ATCC 29342 / M129 / Subtype 1) (Mycoplasmoides pneumoniae).